Consider the following 439-residue polypeptide: ATP-dependent RNA helicase RhlB (439 aa).

The Q motif signature appears at 9 to 37; the sequence is QKFADLPLHPEVKQALAENGFEFCTPIQA. A Helicase ATP-binding domain is found at 40–219; the sequence is LPVLLQSKDI…YDHMNDPVKV (180 aa). 53 to 60 lines the ATP pocket; the sequence is AQTGTGKT. Positions 165–168 match the DEAD box motif; it reads DEAD. Residues 243-390 enclose the Helicase C-terminal domain; sequence KIRLLLTLIE…VSNYDRDALL (148 aa). The tract at residues 395-439 is disordered; sequence PPVKIHRKHPAGARNLRERSGAGRPQGAHRSGGRPPRHDRTRRQP. The segment covering 425–439 has biased composition (basic residues); the sequence is SGGRPPRHDRTRRQP.

Belongs to the DEAD box helicase family. RhlB subfamily. As to quaternary structure, component of the RNA degradosome, which is a multiprotein complex involved in RNA processing and mRNA degradation.

The protein resides in the cytoplasm. It carries out the reaction ATP + H2O = ADP + phosphate + H(+). Functionally, DEAD-box RNA helicase involved in RNA degradation. Has RNA-dependent ATPase activity and unwinds double-stranded RNA. The polypeptide is ATP-dependent RNA helicase RhlB (Shewanella sp. (strain MR-4)).